Here is a 365-residue protein sequence, read N- to C-terminus: GTPase Obg (365 aa).

In terms of domain architecture, Obg spans 2 to 160 (ESFVDEVAIE…KFLRLSLKLL (159 aa)). Positions 161-329 (ADVGIVGLPN…LLEAMDEAFF (169 aa)) constitute an OBG-type G domain. GTP-binding positions include 167 to 174 (GLPNAGKS), 192 to 196 (FTTLS), 215 to 218 (DIPG), 282 to 285 (NKID), and 310 to 312 (SAD). 2 residues coordinate Mg(2+): Ser-174 and Thr-194.

Belongs to the TRAFAC class OBG-HflX-like GTPase superfamily. OBG GTPase family. Monomer. Mg(2+) serves as cofactor.

The protein resides in the cytoplasm. In terms of biological role, an essential GTPase which binds GTP, GDP and possibly (p)ppGpp with moderate affinity, with high nucleotide exchange rates and a fairly low GTP hydrolysis rate. Plays a role in control of the cell cycle, stress response, ribosome biogenesis and in those bacteria that undergo differentiation, in morphogenesis control. This is GTPase Obg from Leptospira borgpetersenii serovar Hardjo-bovis (strain JB197).